Consider the following 349-residue polypeptide: tRNA pseudouridine synthase D (349 aa).

Phe27 is a binding site for substrate. The active-site Nucleophile is Asp80. Asn129 contributes to the substrate binding site. The 149-residue stretch at 155 to 303 folds into the TRUD domain; sequence GVPNYFGAQR…VEAARRAMLL (149 aa). Phe329 contacts substrate.

This sequence belongs to the pseudouridine synthase TruD family.

It carries out the reaction uridine(13) in tRNA = pseudouridine(13) in tRNA. In terms of biological role, responsible for synthesis of pseudouridine from uracil-13 in transfer RNAs. The polypeptide is tRNA pseudouridine synthase D (Escherichia coli O17:K52:H18 (strain UMN026 / ExPEC)).